A 438-amino-acid chain; its full sequence is 3-phosphoshikimate 1-carboxyvinyltransferase (438 aa).

Phosphoenolpyruvate is bound at residue K21. 3-phosphoshikimate contacts are provided by S22 and R26. Residues 93–96 (NSGT) form a phosphoenolpyruvate region. The phosphoenolpyruvate site is built by G95, T96, and R123. The 3-phosphoshikimate site is built by S167, A168, Q169, D315, and K342. Q169 provides a ligand contact to phosphoenolpyruvate. D315 (proton acceptor) is an active-site residue. Positions 346 and 387 each coordinate phosphoenolpyruvate.

It belongs to the EPSP synthase family. In terms of assembly, homodimer or homotetramer.

Its subcellular location is the cytoplasm. It carries out the reaction 3-phosphoshikimate + phosphoenolpyruvate = 5-O-(1-carboxyvinyl)-3-phosphoshikimate + phosphate. It functions in the pathway metabolic intermediate biosynthesis; chorismate biosynthesis; chorismate from D-erythrose 4-phosphate and phosphoenolpyruvate: step 6/7. Functionally, catalyzes the transfer of the enolpyruvyl moiety of phosphoenolpyruvate (PEP) to the 5-hydroxyl of shikimate-3-phosphate (S3P) to produce enolpyruvyl shikimate-3-phosphate and inorganic phosphate. The sequence is that of 3-phosphoshikimate 1-carboxyvinyltransferase from Coxiella burnetii (strain RSA 493 / Nine Mile phase I).